A 413-amino-acid chain; its full sequence is Heparan-sulfate 6-O-sulfotransferase 1-A (413 aa).

Residues 9–15 (MVERSSK) are Cytoplasmic-facing. The helical; Signal-anchor for type II membrane protein transmembrane segment at 16–36 (FLFIVVGSVLFMLILYQYVAP) threads the bilayer. Over 37–413 (GMMNFGSPHG…DYMNHIINRW (377 aa)) the chain is Lumenal. 92-100 (HIQKTGGTT) is a binding site for 3'-phosphoadenylyl sulfate. Substrate contacts are provided by residues 122 to 123 (KK), R139, W144, and H149. H149 (proton acceptor) is an active-site residue. 3'-phosphoadenylyl sulfate is bound by residues R183 and S191. Residues H195 and W202 each contribute to the substrate site. A glycan (N-linked (GlcNAc...) asparagine) is linked at N262. 315–317 (MQY) lines the 3'-phosphoadenylyl sulfate pocket. Residue N318 is glycosylated (N-linked (GlcNAc...) asparagine). Residue 321-322 (RA) participates in 3'-phosphoadenylyl sulfate binding. N-linked (GlcNAc...) asparagine glycosylation is present at N329. The tract at residues 374–401 (PLFPFRRTSSSDSTFRDDAPESEGSRLP) is disordered.

The protein belongs to the sulfotransferase 6 family. During somitogenesis, first expressed in polster and presumptive forebrain. During mid-somitogenesis, expressed in eye, hindbrain and anterior spinal cord. During late somitogenesis, strong expression in eye and hindbrain, decreased levels in midbrain and anterior spinal cord. At 24 hours post-fertilization (hpf), expressed in neural retina and lens, brain and anterior spinal cord. At 36 hpf, retinal expression is confined to the ciliary marginal zone and there is strong expression in tectum, rhombomeres and otic vesicle. At 48 hpf, expressed in retinal ganglion cells and in tectum, rhombomeres and pectoral fin. Not detected in the vasculature during embryogenesis.

It is found in the membrane. The enzyme catalyses alpha-D-glucosaminyl-[heparan sulfate](n) + 3'-phosphoadenylyl sulfate = 6-sulfo-alpha-D-glucosaminyl-[heparan sulfate](n) + adenosine 3',5'-bisphosphate + H(+). In terms of biological role, 6-O-sulfation enzyme which catalyzes the transfer of sulfate from 3'-phosphoadenosine 5'-phosphosulfate (PAPS) to position 6 of the N-sulfoglucosamine residue (GlcNS) of heparan sulfate. This Danio rerio (Zebrafish) protein is Heparan-sulfate 6-O-sulfotransferase 1-A.